Consider the following 473-residue polypeptide: ATP synthase subunit beta (473 aa).

158 to 165 is an ATP binding site; sequence GGAGVGKT.

This sequence belongs to the ATPase alpha/beta chains family. F-type ATPases have 2 components, CF(1) - the catalytic core - and CF(0) - the membrane proton channel. CF(1) has five subunits: alpha(3), beta(3), gamma(1), delta(1), epsilon(1). CF(0) has three main subunits: a(1), b(2) and c(9-12). The alpha and beta chains form an alternating ring which encloses part of the gamma chain. CF(1) is attached to CF(0) by a central stalk formed by the gamma and epsilon chains, while a peripheral stalk is formed by the delta and b chains.

The protein resides in the cell membrane. The catalysed reaction is ATP + H2O + 4 H(+)(in) = ADP + phosphate + 5 H(+)(out). In terms of biological role, produces ATP from ADP in the presence of a proton gradient across the membrane. The catalytic sites are hosted primarily by the beta subunits. The sequence is that of ATP synthase subunit beta from Geobacillus stearothermophilus (Bacillus stearothermophilus).